A 398-amino-acid chain; its full sequence is Exodeoxyribonuclease 7 large subunit (398 aa).

This sequence belongs to the XseA family. As to quaternary structure, heterooligomer composed of large and small subunits.

Its subcellular location is the cytoplasm. The catalysed reaction is Exonucleolytic cleavage in either 5'- to 3'- or 3'- to 5'-direction to yield nucleoside 5'-phosphates.. Its function is as follows. Bidirectionally degrades single-stranded DNA into large acid-insoluble oligonucleotides, which are then degraded further into small acid-soluble oligonucleotides. The polypeptide is Exodeoxyribonuclease 7 large subunit (Chlorobaculum tepidum (strain ATCC 49652 / DSM 12025 / NBRC 103806 / TLS) (Chlorobium tepidum)).